The sequence spans 108 residues: Circadian clock oscillator protein KaiB (108 aa).

It belongs to the KaiB family. As to quaternary structure, undergoes a major conformational rearrangment; in the free state forms homotetramers with 2 dimers. When bound to the CI domain of KaiC, KaiA or CikA switches to a monomeric thioredoxin-fold (KaiB(fs)). The KaiABC complex composition changes during the circadian cycle to control KaiC phosphorylation. Complexes KaiC(6), KaiA(2-4):KaiC(6), KaiB(6):KaiC(6) and KaiC(6):KaiB(6):KaiA(12) are among the most important forms, many form cooperatively. Binds to KaiA; 1 KaiB(fs) binds to the KaiA homodimer. Binds to the B-loop in the CI domain of KaiC; SasA and KaiB compete to bind to the CI domain. Binding to KaiC CI domain occurs 1:1. KaiA and CikA bind to the same region of KaiB(fs) and therefore compete.

Functionally, key component of the KaiABC oscillator complex, which constitutes the main circadian regulator in cyanobacteria. Its composition changes during the circadian cycle to control KaiC phosphorylation. KaiA stimulates KaiC autophosphorylation, while KaiB sequesters KaiA, leading to KaiC autodephosphorylation. KaiA binding to KaiC yields KaiA(2-4):KaiC(6) complexes which stimulate KaiC autophosphorylation. Phospho-Ser-431 KaiC accumulation triggers binding of KaiB to form the KaiB(6):KaiC(6) complex, leading to changes in the output regulators CikA and SasA. KaiB switches to a thioredoxin-like fold (KaiB(fs)) in complex with KaiC. KaiB(6):KaiC(6) formation exposes a site for KaiA binding that sequesters KaiA from the CII domain, making the KaiC(6):KaiB(6):KaiA(12) complex that results in KaiC autodephosphorylation. Complete dephosphorylation of KaiC leads to dissociation of KaiA(2):KaiB(1), completing 1 cycle of the Kai oscillator. Its function is as follows. A metamorphic protein which reversibly switches between an inactive tetrameric fold and a rare, thioredoxin-like monomeric fold (KaiB(fs)). KaiB(fs) binds phospho-KaiC, KaiA and CikA. KaiA and CikA compete for binding to KaiB(fs), and KaiB(fs) and SasA compete for binding to KaiC, thus the clock oscillator and output signal pathway are tightly coupled. In Thermosynechococcus vestitus (strain NIES-2133 / IAM M-273 / BP-1), this protein is Circadian clock oscillator protein KaiB.